The following is a 405-amino-acid chain: Secreted aspartic protease 8 (405 aa).

The signal sequence occupies residues Met1–Ala25. An N-linked (GlcNAc...) asparagine glycan is attached at Asn50. The segment at Thr52–Val78 is disordered. The segment covering His58–Gln70 has biased composition (low complexity). One can recognise a Peptidase A1 domain in the interval Tyr89–Ala392. The active site involves Asp107. Residue Asp107–Gly109 coordinates pepstatin A. Residues Cys122 and Cys134 are joined by a disulfide bond. Asp292 is an active-site residue. A pepstatin A-binding site is contributed by Asp292–Thr296. A disulfide bond links Cys327 and Cys358.

It belongs to the peptidase A1 family. In terms of assembly, monomer.

The protein resides in the secreted. The enzyme catalyses Preferential cleavage at the carboxyl of hydrophobic amino acids, but fails to cleave 15-Leu-|-Tyr-16, 16-Tyr-|-Leu-17 and 24-Phe-|-Phe-25 of insulin B chain. Activates trypsinogen, and degrades keratin.. Functionally, secreted aspartic peptidases (SAPs) are a group of ten acidic hydrolases considered as key virulence factors. These enzymes supply the fungus with nutrient amino acids as well as are able to degrade the selected host's proteins involved in the immune defense. Moreover, acts toward human hemoglobin though limited proteolysis to generate a variety of antimicrobial hemocidins, enabling to compete with the other microorganisms of the same physiological niche using the microbicidal peptides generated from the host protein. Its function is as follows. Plays a key role in defense against host by cleaving histatin-5 (Hst 5), a peptide from human saliva that carries out fungicidal activity. The cleavage rate decreases in an order of SAP2 &gt; SAP9 &gt; SAP3 &gt; SAP7 &gt; SAP4 &gt; SAP1 &gt; SAP8. The hydrolysis of Hst 5 by SAP8 causes production of the DSHAKRHHGY, HHSHRGY and FHEKHHSHRGY peptides. The sequence is that of Secreted aspartic protease 8 from Candida albicans (Yeast).